The chain runs to 31 residues: Cytochrome b6-f complex subunit 6 (31 aa).

A helical transmembrane segment spans residues 4–24; it reads IFSYIALLLSALVITLTCYIG.

Belongs to the PetL family. As to quaternary structure, the 4 large subunits of the cytochrome b6-f complex are cytochrome b6, subunit IV (17 kDa polypeptide, PetD), cytochrome f and the Rieske protein, while the 4 small subunits are PetG, PetL, PetM and PetN. The complex functions as a dimer.

The protein resides in the plastid. Its subcellular location is the chloroplast thylakoid membrane. Functionally, component of the cytochrome b6-f complex, which mediates electron transfer between photosystem II (PSII) and photosystem I (PSI), cyclic electron flow around PSI, and state transitions. PetL is important for photoautotrophic growth as well as for electron transfer efficiency and stability of the cytochrome b6-f complex. The protein is Cytochrome b6-f complex subunit 6 of Chlorella vulgaris (Green alga).